The primary structure comprises 277 residues: Bifunctional protein FolD (277 aa).

NADP(+) contacts are provided by residues 164–166, serine 189, and valine 230; that span reads GRS.

Belongs to the tetrahydrofolate dehydrogenase/cyclohydrolase family. Homodimer.

It carries out the reaction (6R)-5,10-methylene-5,6,7,8-tetrahydrofolate + NADP(+) = (6R)-5,10-methenyltetrahydrofolate + NADPH. It catalyses the reaction (6R)-5,10-methenyltetrahydrofolate + H2O = (6R)-10-formyltetrahydrofolate + H(+). The protein operates within one-carbon metabolism; tetrahydrofolate interconversion. Functionally, catalyzes the oxidation of 5,10-methylenetetrahydrofolate to 5,10-methenyltetrahydrofolate and then the hydrolysis of 5,10-methenyltetrahydrofolate to 10-formyltetrahydrofolate. In Exiguobacterium sibiricum (strain DSM 17290 / CCUG 55495 / CIP 109462 / JCM 13490 / 255-15), this protein is Bifunctional protein FolD.